The chain runs to 103 residues: uncharacterized protein (103 aa).

This is an uncharacterized protein from Microplitis demolitor (Parasitoid wasp).